The primary structure comprises 143 residues: Peptide methionine sulfoxide reductase MsrB (143 aa).

Residues 5–127 (NEELKKKLTP…NSAALRFIPK (123 aa)) form the MsrB domain. C116 (nucleophile) is an active-site residue.

This sequence belongs to the MsrB Met sulfoxide reductase family.

The catalysed reaction is L-methionyl-[protein] + [thioredoxin]-disulfide + H2O = L-methionyl-(R)-S-oxide-[protein] + [thioredoxin]-dithiol. This chain is Peptide methionine sulfoxide reductase MsrB, found in Halalkalibacterium halodurans (strain ATCC BAA-125 / DSM 18197 / FERM 7344 / JCM 9153 / C-125) (Bacillus halodurans).